A 1117-amino-acid chain; its full sequence is Telomerase reverse transcriptase (1117 aa).

The TEN stretch occupies residues 1 to 191 (MQKINNINNN…VKQKKWYKNN (191 aa)). The RBD stretch occupies residues 217–519 (NQYIYPEIQR…ENLEKVEEKL (303 aa)). The Reverse transcriptase domain maps to 517-881 (EKLIPEDSFQ…NECQWIGKSI (365 aa)). Residues 520 to 887 (IPEDSFQKYP…GKSIDMNTLE (368 aa)) form an RT region. A Mg(2+)-binding site is contributed by Asp618. Positions 638–742 (SDLIQDTYFI…NQDKPRCITK (105 aa)) are TRAP. Positions 815 and 816 each coordinate Mg(2+). The segment at 888–1117 (IKSIQKQTQQ…SAKSNQQNTN (230 aa)) is CTE.

Belongs to the reverse transcriptase family. Telomerase subfamily. Component of the telomerase holoenzyme complex, composed of the catalytic core (the catalytic subunit TERT, the telomerase RNA template component TER and TAP65/p65), which is associated with two heterotrimeric subcomplexes: (i) the replication protein A (RPA)-related subcomplex, composed of TEB1, RPA2/TEB2 and RPA3/TEB3 and (ii) the CST-like subcomplex, composed of TAP75/p75, TAP45/p45 and TAP19/p19. TEB1 and the CST-like subcomplex are tethered to the catalytic core by TAP50/p50.

The protein localises to the nucleus. The protein resides in the chromosome. It is found in the telomere. It catalyses the reaction DNA(n) + a 2'-deoxyribonucleoside 5'-triphosphate = DNA(n+1) + diphosphate. Catalytic component of telomerase, an essential ribonucleoprotein enzyme that copies new telomeric repeats onto chromosome ends by repetitively synthesizing the short telomere-repeat sequence 5'-TTGGGG-3' using an RNA template component TER. TERT is a reverse transcriptase that adds simple sequence repeats to chromosome ends by copying a template sequence within the RNA component of the enzyme. The polypeptide is Telomerase reverse transcriptase (Tetrahymena thermophila (strain SB210)).